Consider the following 155-residue polypeptide: Deoxyuridine 5'-triphosphate nucleotidohydrolase (155 aa).

Substrate-binding positions include 74–76 (RSG), asparagine 87, and 91–93 (LID).

Belongs to the dUTPase family. Requires Mg(2+) as cofactor.

It carries out the reaction dUTP + H2O = dUMP + diphosphate + H(+). It participates in pyrimidine metabolism; dUMP biosynthesis; dUMP from dCTP (dUTP route): step 2/2. Its function is as follows. This enzyme is involved in nucleotide metabolism: it produces dUMP, the immediate precursor of thymidine nucleotides and it decreases the intracellular concentration of dUTP so that uracil cannot be incorporated into DNA. The polypeptide is Deoxyuridine 5'-triphosphate nucleotidohydrolase (Xylella fastidiosa (strain M12)).